The sequence spans 330 residues: Putative protein N-methyltransferase FAM86B1 (330 aa).

S-adenosyl-L-methionine-binding positions include Trp-139, 165-167, Trp-228, and Ala-247; that span reads GSG.

The protein belongs to the class I-like SAM-binding methyltransferase superfamily. EEF2KMT family.

The polypeptide is Putative protein N-methyltransferase FAM86B1 (Homo sapiens (Human)).